Here is a 424-residue protein sequence, read N- to C-terminus: MVSESHHEALAAPPATTVAAALPSNVTEPAAPGGGGGKEDAFSNLKKKFMNELNKIPLPPWALIAIAIVAVLLILTCCFCLCKKCLFKKKNKKKGKEKGGKNAINMKDVKDLGKTMKDQALKDDDAETGLTDGEEKEEPKEVEKLGKIQYSLDYDFQNNQLLVGIIQAAELPALDMGGTSDPYVKVFLLPDKKKKYETKVHRKTLNPVFNEQFTFKVPYSELGGKTLVMAVYDFDRFSKHDIIGEYKVAMNTVDFGHVTEEWRDLQSAEKEEQEKLGDICFSLRYVPTAGKLTVVILEAKNLKKMDVGGLSDPYVKIHLMQNGKRLKKKKTTIKKNTLNPYYNESFSFEVPFEQIQKVQIVVTVLDYDKIGKNDAIGKVFVGYNSTGAELRHWSDMLANPRRPIAQWHTLQPEEEVDAMLAVKK.

Residues Met1 to Pro60 lie on the Vesicular side of the membrane. The N-linked (GlcNAc...) asparagine glycan is linked to Asn25. Residues Trp61 to Cys82 traverse the membrane as a helical segment. Residues Cys77, Cys78, Cys80, Cys82, and Cys85 are each lipidated (S-palmitoyl cysteine). Over Lys83–Lys424 the chain is Cytoplasmic. Residues Lys117 to Val142 are disordered. Residues Asp124 to Lys136 show a composition bias toward acidic residues. A phospholipid binding region spans residues Glu138–Asn384. 2 consecutive C2 domains span residues Lys144 to Arg263 and Lys275 to His408. Residues Leu174, Asp175, Asp181, Asp233, Phe234, Asp235, Ser238, Lys239, Asp241, Asp306, Asp312, Asp366, Asp368, and Asp374 each coordinate Ca(2+).

Belongs to the synaptotagmin family. Homotetramer. Ca(2+) is required as a cofactor.

It localises to the cytoplasmic vesicle. Its subcellular location is the secretory vesicle membrane. The protein resides in the secretory vesicle. It is found in the synaptic vesicle membrane. The protein localises to the chromaffin granule membrane. It localises to the cytoplasm. Its function is as follows. Calcium sensor that participates in triggering neurotransmitter release at the synapse. May have a regulatory role in the membrane interactions during trafficking of synaptic vesicles at the active zone of the synapse. It binds acidic phospholipids with a specificity that requires the presence of both an acidic head group and a diacyl backbone. May play a role in dendrite formation by melanocytes. The sequence is that of Synaptotagmin-1 (SYT1) from Gallus gallus (Chicken).